An 851-amino-acid polypeptide reads, in one-letter code: Meiotically up-regulated gene 87 protein (851 aa).

It belongs to the nucleoporin interacting component (NIC) family.

The protein localises to the nucleus envelope. Has a role in meiosis. The protein is Meiotically up-regulated gene 87 protein (mug87) of Schizosaccharomyces pombe (strain 972 / ATCC 24843) (Fission yeast).